The sequence spans 124 residues: Protein MGF 110-8L (124 aa).

The N-terminal stretch at 1-16 (MKVLILVLLAVVILQA) is a signal peptide. N-linked (GlcNAc...) asparagine; by host glycans are attached at residues Asn76 and Asn94.

Belongs to the asfivirus MGF 110 family.

Plays a role in virus cell tropism, and may be required for efficient virus replication in macrophages. This Ornithodoros (relapsing fever ticks) protein is Protein MGF 110-8L.